A 134-amino-acid chain; its full sequence is Small ribosomal subunit protein uS11 (134 aa).

Positions 1–24 are disordered; it reads MATKMAGVKRAGRKRKERKNIERG.

This sequence belongs to the universal ribosomal protein uS11 family. As to quaternary structure, part of the 30S ribosomal subunit. Interacts with proteins S7 and S18. Binds to IF-3.

Functionally, located on the platform of the 30S subunit, it bridges several disparate RNA helices of the 16S rRNA. Forms part of the Shine-Dalgarno cleft in the 70S ribosome. This chain is Small ribosomal subunit protein uS11, found in Acetivibrio thermocellus (strain ATCC 27405 / DSM 1237 / JCM 9322 / NBRC 103400 / NCIMB 10682 / NRRL B-4536 / VPI 7372) (Clostridium thermocellum).